A 142-amino-acid chain; its full sequence is 3-hydroxyacyl-[acyl-carrier-protein] dehydratase FabZ (142 aa).

Histidine 48 is a catalytic residue.

It belongs to the thioester dehydratase family. FabZ subfamily.

It is found in the cytoplasm. The enzyme catalyses a (3R)-hydroxyacyl-[ACP] = a (2E)-enoyl-[ACP] + H2O. Its function is as follows. Involved in unsaturated fatty acids biosynthesis. Catalyzes the dehydration of short chain beta-hydroxyacyl-ACPs and long chain saturated and unsaturated beta-hydroxyacyl-ACPs. The polypeptide is 3-hydroxyacyl-[acyl-carrier-protein] dehydratase FabZ (Anoxybacillus flavithermus (strain DSM 21510 / WK1)).